Here is a 468-residue protein sequence, read N- to C-terminus: UDP-N-acetylmuramoylalanine--D-glutamate ligase (468 aa).

117 to 123 contributes to the ATP binding site; sequence GTDGKTT.

It belongs to the MurCDEF family.

It is found in the cytoplasm. The enzyme catalyses UDP-N-acetyl-alpha-D-muramoyl-L-alanine + D-glutamate + ATP = UDP-N-acetyl-alpha-D-muramoyl-L-alanyl-D-glutamate + ADP + phosphate + H(+). It participates in cell wall biogenesis; peptidoglycan biosynthesis. In terms of biological role, cell wall formation. Catalyzes the addition of glutamate to the nucleotide precursor UDP-N-acetylmuramoyl-L-alanine (UMA). The polypeptide is UDP-N-acetylmuramoylalanine--D-glutamate ligase (Chloroherpeton thalassium (strain ATCC 35110 / GB-78)).